The following is a 247-amino-acid chain: Caffeoyl-CoA O-methyltransferase (247 aa).

Lys21 contacts substrate. S-adenosyl-L-methionine is bound by residues Thr63, Glu85, 87 to 88, Ser93, Asp111, and Ala140; that span reads GV. Asp163 provides a ligand contact to substrate. Residue Asp163 coordinates a divalent metal cation. Position 165 (Asp165) interacts with S-adenosyl-L-methionine. A divalent metal cation-binding residues include Asp189 and Asn190. Asn194 serves as a coordination point for substrate.

The protein belongs to the class I-like SAM-binding methyltransferase superfamily. Cation-dependent O-methyltransferase family. CCoAMT subfamily. Homodimer. Ca(2+) is required as a cofactor. It depends on Mg(2+) as a cofactor. The cofactor is Zn(2+).

It catalyses the reaction (E)-caffeoyl-CoA + S-adenosyl-L-methionine = (E)-feruloyl-CoA + S-adenosyl-L-homocysteine + H(+). The protein operates within aromatic compound metabolism; phenylpropanoid biosynthesis. Functionally, methylates caffeoyl-CoA to feruloyl-CoA and 5-hydroxyferuloyl-CoA to sinapoyl-CoA. Plays a role in the synthesis of feruloylated polysaccharides. Involved in the reinforcement of the plant cell wall. Also involved in the responding to wounding or pathogen challenge by the increased formation of cell wall-bound ferulic acid polymers. This is Caffeoyl-CoA O-methyltransferase (CCOMT) from Medicago sativa (Alfalfa).